The primary structure comprises 254 residues: PSME3-interacting protein (254 aa).

Met1 carries the N-acetylmethionine modification. Ser17 is subject to Phosphoserine. The span at 22 to 39 shows a compositional bias: basic and acidic residues; the sequence is DERRKRRQEEWEKVRKPE. The segment at 22–52 is disordered; that stretch reads DERRKRRQEEWEKVRKPEDPEECPEEVYDPR. N6-acetyllysine is present on Lys139. Residues 155–195 form a disordered region; sequence GAVKHKSSESGNSVKRLKPDPEPDDKNQEPSSCKSLGNTSL. Over residues 171–182 the composition is skewed to basic and acidic residues; sequence LKPDPEPDDKNQ. Over residues 183-195 the composition is skewed to polar residues; that stretch reads EPSSCKSLGNTSL. The interaction with PSME3 stretch occupies residues 201-254; sequence HCPSAAVCIGILPGLGAYSGSSDSESSSDSEGTINATGKIVSSIFRTNTFLEAP. 2 positions are modified to phosphoserine; by CK2: Ser222 and Ser228.

As to quaternary structure, interacts (via C-terminus) with both free and 20S proteasome-bound forms of the proteasome activator complex subunit PSME3; the interaction is direct. Phosphorylation by CK2 stabilizes the interaction with PSME3.

Its subcellular location is the nucleus. Its function is as follows. Promotes the association of the proteasome activator complex subunit PSME3 with the 20S proteasome and regulates its activity. Inhibits PSME3-mediated degradation of some proteasome substrates, probably by affecting their diffusion rate into the catalytic chamber of the proteasome. Also inhibits the interaction of PSME3 with COIL, inhibits accumulation of PSME3 in Cajal bodies and positively regulates the number of Cajal bodies in the nucleus. The chain is PSME3-interacting protein from Homo sapiens (Human).